The following is a 132-amino-acid chain: Small ribosomal subunit protein uS8 (132 aa).

The protein belongs to the universal ribosomal protein uS8 family. Part of the 30S ribosomal subunit. Contacts proteins S5 and S12.

In terms of biological role, one of the primary rRNA binding proteins, it binds directly to 16S rRNA central domain where it helps coordinate assembly of the platform of the 30S subunit. The protein is Small ribosomal subunit protein uS8 of Bartonella bacilliformis (strain ATCC 35685 / KC583 / Herrer 020/F12,63).